The sequence spans 587 residues: Kelch-like protein 3 (587 aa).

The segment at methionine 1–arginine 24 is disordered. One can recognise a BTB domain in the interval cysteine 50 to glutamate 117. The region spanning cysteine 152–glutamate 254 is the BACK domain. Phosphothreonine is present on threonine 295. 6 Kelch repeats span residues valine 302 to glycine 347, histidine 348 to aspartate 394, leucine 396 to glycine 441, lysine 442 to glycine 490, glutamine 491 to glycine 537, and leucine 539 to lysine 585. A Phosphothreonine modification is found at threonine 375. Residues serine 376 and serine 433 each carry the phosphoserine modification.

This sequence belongs to the KLHL3 family. As to quaternary structure, homodimer. Component of the BCR(KLHL3) E3 ubiquitin ligase complex, at least composed of CUL3 and KLHL3 and RBX1. Interacts with CLDN8. Phosphorylation at Ser-433 by PKA or PKC decreases the interaction with WNK1 and WNK4, leading to inhibit their degradation by the BCR(KLHL3) complex. Phosphorylated at Ser-433 by PKC in response to angiotensin II signaling, decreasing ability to promote degradation of WNK1 and WNK4, leading to activation of Na-Cl cotransporter SLC12A3/NCC. Phosphorylation at Ser-433 is increased by insulin. Dephosphorylated at Ser-433 by calcineurin PPP3CA, promoting degradation of WNK1 and WNK4. As to expression, present at high level in brain and kidney (at protein level). Weakly expressed in other tissues. In kidney, predominantly localizes to the distal convoluted tubule (DCT) and collecting duct, with apical localization in the DCT (at protein level).

The protein resides in the cytoplasm. Its subcellular location is the cytosol. It is found in the cytoskeleton. It functions in the pathway protein modification; protein ubiquitination. Substrate-specific adapter of a BCR (BTB-CUL3-RBX1) E3 ubiquitin ligase complex that acts as a regulator of ion transport in the distal nephron. The BCR(KLHL3) complex acts by mediating ubiquitination and degradation of WNK1 and WNK4, two activators of Na-Cl cotransporter SLC12A3/NCC in distal convoluted tubule cells of kidney, thereby regulating NaCl reabsorption. The BCR(KLHL3) complex also mediates ubiquitination of CLDN8, a tight-junction protein required for paracellular chloride transport in the kidney, leading to its degradation. This Mus musculus (Mouse) protein is Kelch-like protein 3.